The sequence spans 358 residues: Arginine kinase (358 aa).

One can recognise a Phosphagen kinase N-terminal domain in the interval 2 to 84 (SDADLFSKLD…LDEVIKDYHK (83 aa)). 57-61 (GVGIY) is a binding site for substrate. The Phosphagen kinase C-terminal domain occupies 112–350 (FIVSTRVRVG…EEILKREKEL (239 aa)). ATP-binding positions include 115-119 (STRVR) and His178. Glu218 is a binding site for substrate. Arg222 is an ATP binding site. Cys265 provides a ligand contact to substrate. Residues 274–278 (RASVH) and 303–308 (RGIHGE) each bind ATP. Glu308 is a binding site for substrate.

Belongs to the ATP:guanido phosphotransferase family.

The catalysed reaction is L-arginine + ATP = N(omega)-phospho-L-arginine + ADP + H(+). This Turbo cornutus (Horned turban) protein is Arginine kinase.